A 314-amino-acid polypeptide reads, in one-letter code: tRNA pseudouridine synthase B (314 aa).

H43 lines the substrate pocket. The active-site Nucleophile is the D48. Substrate-binding residues include Y76, Y179, and L200.

It belongs to the pseudouridine synthase TruB family. Type 1 subfamily.

The catalysed reaction is uridine(55) in tRNA = pseudouridine(55) in tRNA. Functionally, responsible for synthesis of pseudouridine from uracil-55 in the psi GC loop of transfer RNAs. This Salmonella paratyphi A (strain ATCC 9150 / SARB42) protein is tRNA pseudouridine synthase B.